Consider the following 612-residue polypeptide: Proton channel OTOP1 (612 aa).

Residues 1–46 (MLEGLGSPASPRAAASASVAGSSGPAACSPPSSSAPRSPESPAPRR) show a composition bias toward low complexity. The segment at 1 to 50 (MLEGLGSPASPRAAASASVAGSSGPAACSPPSSSAPRSPESPAPRRGGVR) is disordered. The Cytoplasmic portion of the chain corresponds to 1–58 (MLEGLGSPASPRAAASASVAGSSGPAACSPPSSSAPRSPESPAPRRGGVRASVPQKLA). Residues 59–80 (EMLSSQYGLIVFVAGLLLLLAW) traverse the membrane as a helical segment. Residues 81–88 (AVHAAGVS) are Extracellular-facing. Residues 89-112 (KSDLLCFLTALMLLQLLWMLWYVG) form a helical membrane-spanning segment. The Cytoplasmic segment spans residues 113–130 (RSSAHRRLFRLKDTHAGA). Residues 131–153 (GWLRGSITLFAVITVILGCLKIG) form a helical membrane-spanning segment. Residues 154 to 163 (YFIGFSECLS) lie on the Extracellular side of the membrane. Residues 164–188 (ATEGVFPVTHSVHTLLQVYFLWGHA) traverse the membrane as a helical segment. Over 189–196 (KDIIQSFK) the chain is Cytoplasmic. The chain crosses the membrane as a helical span at residues 197–223 (TLERFGVIHSVFTNLLLWANGVLNESK). Topologically, residues 224–264 (HQLNEHKERLITLGFGNITTVLDDHTPQCNCTPPTLCTAIS) are extracellular. A helical transmembrane segment spans residues 265 to 290 (HGIYYLYPFNIEYQILASTMLYVLWK). The Cytoplasmic portion of the chain corresponds to 291-311 (NIGRKVDSHQHQKMQFKSDGV). A helical transmembrane segment spans residues 312–334 (MVGAVLGLTVLAATIAVVVVYLI). Residues 335–344 (HIGRSKTKSE) lie on the Extracellular side of the membrane. The helical transmembrane segment at 345-370 (SALIMFYLYAITLLMLMGAAGLAGIR) threads the bilayer. Over 371 to 388 (IYRIDEKSLDESKNPARK) the chain is Cytoplasmic. Residues 389–413 (LDSDLLVGTASGSWLISWGSILAIL) form a helical membrane-spanning segment. The Extracellular segment spans residues 414 to 423 (CAEGHPRYTW). A helical membrane pass occupies residues 424–444 (YNLPYSILAIVEKYIQNLFIF). The Cytoplasmic segment spans residues 445–544 (ESIHREPEKL…QGNAKRKVLR (100 aa)). The disordered stretch occupies residues 499–525 (ANGNVCMRESHDKEEEKQEESSWGGSP). A compositionally biased stretch (basic and acidic residues) spans 506–518 (RESHDKEEEKQEE). A helical membrane pass occupies residues 545-563 (NIAAFLFLCNISLWIPPAF). Topologically, residues 564–581 (GCRPEYDNGLEEIVFGFE) are extracellular. The chain crosses the membrane as a helical span at residues 582 to 605 (PWIIVVNLAMPFSIFYRMHAAASL). At 606–612 (FEVYCKI) the chain is on the cytoplasmic side.

The protein belongs to the otopetrin family. Homodimer. Interacts with STAT1, independently of STAT1 phosphorylation status.

It is found in the cell membrane. Its subcellular location is the cell projection. The protein resides in the microvillus. It catalyses the reaction H(+)(in) = H(+)(out). Its activity is regulated as follows. Activated by both acid and alkali, with proton influx in response to extracellular acid and proton efflux during alkali stimulation. Inhibited by Zn(2+); this inhibition is thought to be pH-sensitive. Currents evoked in response to mild acid (pH 6.0) stimulus may also be mildly potentiated by exposure to Zn(2+). Activated by NH(4)Cl. Proton-selective ion channel. Biphasically modulated by acid and alkali, mediating proton influx and efflux in response to extracellular acid and base stimulation, respectively. Sour taste receptor, which carries inward currents in response to extracellular acidification. Sensor for ammonium chloride (NH(4)Cl) in taste receptor cells. NH(4)Cl acts by increasing the intracellular pH, thereby generating a driving force for proton entry through OTOP1 channel. Might also participate in alkaline sensation. Plays a role in the regulation of Ca(2+) flux in response to purigenic (ATP, ADP and UDP) stimuli, leading to increase in cytosolic Ca(2+) due to influx of extracellular calcium. May play this role by inhibiting P2Y purinoceptor-mediated Ca(2+) release in a Ca(2+)-dependent manner and promote an influx of Ca(2+) in response to ATP. Through this mechanism and possibly others, plays a role in the formation and function of calcium carbonate-based structures in the vestibular system of the inner ear, called otoconia, that sense gravity and linear acceleration. In obesity, may attenuate adipose tissue inflammation, through the negative regulation of IFNG signaling, hence may play an adaptive role in the maintainance of metabolic homeostasis. Following alkali activation, may also be permeable Na(+), K(+), Cs(+) and Li(+). The polypeptide is Proton channel OTOP1 (Homo sapiens (Human)).